A 71-amino-acid chain; its full sequence is Large ribosomal subunit protein bL31 (71 aa).

Zn(2+) contacts are provided by Cys16, Cys18, Cys38, and Cys41.

It belongs to the bacterial ribosomal protein bL31 family. Type A subfamily. Part of the 50S ribosomal subunit. Zn(2+) is required as a cofactor.

Functionally, binds the 23S rRNA. In Chromobacterium violaceum (strain ATCC 12472 / DSM 30191 / JCM 1249 / CCUG 213 / NBRC 12614 / NCIMB 9131 / NCTC 9757 / MK), this protein is Large ribosomal subunit protein bL31.